The primary structure comprises 138 residues: MNIIDRFEQENISKRTANKKIPDFEAGDTVKVTVKIIDRSIEKDGKEKLTERFQAYEGVVIAKRNRGITSSFLVRKISHGEGVERRFMTYSPMVHSIDVVKYGVVRRAKLYYLRNRSGKSARIKERHIPIAKTKAAKA.

The protein belongs to the bacterial ribosomal protein bL19 family.

Functionally, this protein is located at the 30S-50S ribosomal subunit interface and may play a role in the structure and function of the aminoacyl-tRNA binding site. The protein is Large ribosomal subunit protein bL19 of Rickettsia conorii (strain ATCC VR-613 / Malish 7).